The chain runs to 79 residues: Succinate dehydrogenase assembly factor 1, mitochondrial (79 aa).

This sequence belongs to the complex I LYR family. SDHAF1 subfamily. Interacts with SDH2 within an SDH1-SDH2 subcomplex.

It localises to the mitochondrion matrix. Plays an essential role in the assembly of succinate dehydrogenase (SDH), an enzyme complex (also referred to as respiratory complex II) that is a component of both the tricarboxylic acid (TCA) cycle and the mitochondrial electron transport chain, and which couples the oxidation of succinate to fumarate with the reduction of ubiquinone (coenzyme Q) to ubiquinol. Promotes maturation of the iron-sulfur protein subunit SDH2 of the SDH catalytic dimer, protecting it from the deleterious effects of oxidants. Acts together with SDHAF3 (SDH7). The protein is Succinate dehydrogenase assembly factor 1, mitochondrial of Saccharomyces cerevisiae (strain YJM789) (Baker's yeast).